The chain runs to 461 residues: MLKIFNTLSRQKEEFKPIHAGKVGMYVCGITIYDLCHIGHGRTFVAFDVVARYLRYLGYSLTYVRNVTDVDDKIIKRAIENNETCEQLTTRMLAEMHKDFDALNLERPDLEPRATHHIAEIIEMTERLIARGHAYVASNGDVMFAVDSDPDYGVLSRQDLDQLQAGARVEVADVKRNPMDFVLWKMSKPGEPRWESPWGPGRPGWHIECSAMNGKQLGAHFDIHGGGSDLMFPHHENEIAQSTCAHDGPYVNYWMHSGMVMIDKEKMSKSLNNFFTIRDVLAYYDAETVRYFLMSGHYRSQLNYSEENLKQARASLERLYTALRGTDANATPAGGAEFEARFRTAMDDDFNTPEAYSVLFDIAREVNRLKNEDMAAANGLAAELRKLAQVLGLLEQDPELFLQGGAQADDDEVAKIEALIKQRNDARSSKNWALADAARDQLNDLGIVLEDGPQGTTWRRK.

Zn(2+) is bound at residue C28. The 'HIGH' region motif lies at 30-40; it reads ITIYDLCHIGH. Residues C209, H234, and E238 each contribute to the Zn(2+) site. A 'KMSKS' region motif is present at residues 266–270; it reads KMSKS. K269 lines the ATP pocket.

Belongs to the class-I aminoacyl-tRNA synthetase family. Monomer. Requires Zn(2+) as cofactor.

The protein resides in the cytoplasm. The enzyme catalyses tRNA(Cys) + L-cysteine + ATP = L-cysteinyl-tRNA(Cys) + AMP + diphosphate. The chain is Cysteine--tRNA ligase from Yersinia pseudotuberculosis serotype IB (strain PB1/+).